The primary structure comprises 1305 residues: Contactin-associated protein-like 5 (1305 aa).

An N-terminal signal peptide occupies residues 1 to 24; the sequence is MDSVPRLTGVFTLLLSGLWHLGSS. Over 25–1236 the chain is Extracellular; the sequence is ATNYNCDDPL…PLTNAVRSDS (1212 aa). An F5/8 type C domain is found at 30–174; it reads CDDPLASLLS…IGMRVEVYGC (145 aa). An intrachain disulfide couples Cys30 to Cys174. 2 consecutive Laminin G-like domains span residues 180–360 and 367–544; these read VADF…TFSC and PITF…IDLC. Asn282, Asn355, and Asn496 each carry an N-linked (GlcNAc...) asparagine glycan. A disulfide bridge connects residues Cys329 and Cys360. 4 disulfide bridges follow: Cys512–Cys544, Cys550–Cys561, Cys555–Cys570, and Cys572–Cys582. The EGF-like 1 domain occupies 546 to 583; that stretch reads IKDRCLPNYCEHGGFCSQSWTTFYCNCSNTGYTGATCH. A Fibrinogen C-terminal domain is found at 584–790; it reads NSLYEQSCEV…LRCYGDRHFW (207 aa). A glycan (N-linked (GlcNAc...) asparagine) is linked at Asn622. One can recognise a Laminin G-like 3 domain in the interval 791-956; the sequence is NAVSFYTEAS…KVTSGVRPGC (166 aa). 5 cysteine pairs are disulfide-bonded: Cys929-Cys956, Cys960-Cys973, Cys967-Cys982, Cys984-Cys994, and Cys1163-Cys1198. In terms of domain architecture, EGF-like 2 spans 957-995; that stretch reads PGHCSTYGSICHNGGKCVEKYSGYFCDCTNSPYEGPFCK. The Laminin G-like 4 domain maps to 1000–1198; it reads AVFEAGTSVT…VQGTLMESSC (199 aa). A helical transmembrane segment spans residues 1237–1257; that stretch reads AVIGGVIAVVIFIIFSIIGIM. The Cytoplasmic segment spans residues 1258–1305; sequence TRFLYQHKQSHRTNQMKEKEYPENLDSSFRNDIDLQNTVSECKREYFI.

It belongs to the neurexin family.

It is found in the membrane. May play a role in the correct development and proper functioning of the peripheral and central nervous system and be involved in cell adhesion and intercellular communication. The protein is Contactin-associated protein-like 5 (CNTNAP5) of Canis lupus familiaris (Dog).